The primary structure comprises 339 residues: Phenylalanine--tRNA ligase alpha subunit (339 aa).

Glu247 serves as a coordination point for Mg(2+).

Belongs to the class-II aminoacyl-tRNA synthetase family. Phe-tRNA synthetase alpha subunit type 1 subfamily. Tetramer of two alpha and two beta subunits. The cofactor is Mg(2+).

It is found in the cytoplasm. The catalysed reaction is tRNA(Phe) + L-phenylalanine + ATP = L-phenylalanyl-tRNA(Phe) + AMP + diphosphate + H(+). The polypeptide is Phenylalanine--tRNA ligase alpha subunit (Deinococcus deserti (strain DSM 17065 / CIP 109153 / LMG 22923 / VCD115)).